A 198-amino-acid polypeptide reads, in one-letter code: Holliday junction branch migration complex subunit RuvA (198 aa).

The domain I stretch occupies residues 1–63 (MYDYIKGQLT…EDAQLLFGFH (63 aa)). Residues 64–142 (SEEEKDVFLK…EAPKEESSKP (79 aa)) form a domain II region. The interval 143–147 (PKAKQ) is flexible linker. Residues 148–198 (QGNEQLDEAVEALLALGYKATELKKIRAFFEGTSETAEQYIKSALKMLMKG) are domain III.

Belongs to the RuvA family. Homotetramer. Forms an RuvA(8)-RuvB(12)-Holliday junction (HJ) complex. HJ DNA is sandwiched between 2 RuvA tetramers; dsDNA enters through RuvA and exits via RuvB. An RuvB hexamer assembles on each DNA strand where it exits the tetramer. Each RuvB hexamer is contacted by two RuvA subunits (via domain III) on 2 adjacent RuvB subunits; this complex drives branch migration. In the full resolvosome a probable DNA-RuvA(4)-RuvB(12)-RuvC(2) complex forms which resolves the HJ.

It is found in the cytoplasm. In terms of biological role, the RuvA-RuvB-RuvC complex processes Holliday junction (HJ) DNA during genetic recombination and DNA repair, while the RuvA-RuvB complex plays an important role in the rescue of blocked DNA replication forks via replication fork reversal (RFR). RuvA specifically binds to HJ cruciform DNA, conferring on it an open structure. The RuvB hexamer acts as an ATP-dependent pump, pulling dsDNA into and through the RuvAB complex. HJ branch migration allows RuvC to scan DNA until it finds its consensus sequence, where it cleaves and resolves the cruciform DNA. The sequence is that of Holliday junction branch migration complex subunit RuvA from Streptococcus equi subsp. equi (strain 4047).